A 137-amino-acid chain; its full sequence is Large ribosomal subunit protein uL16 (137 aa).

The segment covering 1 to 17 (MLQPKRTKFRKQQKGRN) has biased composition (basic residues). Residues 1–21 (MLQPKRTKFRKQQKGRNRGQA) are disordered.

This sequence belongs to the universal ribosomal protein uL16 family. Part of the 50S ribosomal subunit.

Binds 23S rRNA and is also seen to make contacts with the A and possibly P site tRNAs. The sequence is that of Large ribosomal subunit protein uL16 from Nitrosococcus oceani (strain ATCC 19707 / BCRC 17464 / JCM 30415 / NCIMB 11848 / C-107).